Consider the following 562-residue polypeptide: O-fucosyltransferase 4 (562 aa).

The tract at residues serine 10–glutamine 46 is disordered. Over residues lysine 37–glutamine 46 the composition is skewed to low complexity. A helical; Signal-anchor for type II membrane protein membrane pass occupies residues glycine 67–alanine 87. Asparagine 122, asparagine 146, asparagine 185, and asparagine 239 each carry an N-linked (GlcNAc...) asparagine glycan. Position 332-334 (histidine 332–arginine 334) interacts with substrate. 4 N-linked (GlcNAc...) asparagine glycosylation sites follow: asparagine 404, asparagine 420, asparagine 450, and asparagine 555.

The protein belongs to the glycosyltransferase GT106 family.

The protein resides in the membrane. It participates in glycan metabolism. The polypeptide is O-fucosyltransferase 4 (Arabidopsis thaliana (Mouse-ear cress)).